A 497-amino-acid polypeptide reads, in one-letter code: Signal recognition particle receptor FtsY (497 aa).

Disordered regions lie at residues 1 to 63 (MAKE…TEAE) and 79 to 130 (AESE…EWQA). Residues 87-96 (EAEVVAQPEP) are compositionally biased toward low complexity. GTP-binding positions include 300-307 (GVNGVGKT), 382-386 (DTAGR), and 446-449 (TKLD).

The protein belongs to the GTP-binding SRP family. FtsY subfamily. In terms of assembly, part of the signal recognition particle protein translocation system, which is composed of SRP and FtsY. SRP is a ribonucleoprotein composed of Ffh and a 4.5S RNA molecule. Binds to SecY. In terms of processing, proteolytically cleaved. The cleavage may regulate function and subcellular location of FtsY. Full-length FtsY is found primarily associated with the membrane, while cleaved protein is predominantly present in the cytoplasm.

It localises to the cell inner membrane. The protein resides in the cytoplasm. The enzyme catalyses GTP + H2O = GDP + phosphate + H(+). Conformation of the Ffh-FtsY complex and regulation of its GTPase activity are modulated by the 4.5S RNA. Formation of the FfH-FtsY complex leads to a mutual stimulation of both GTPases. In terms of biological role, involved in targeting and insertion of nascent membrane proteins into the cytoplasmic membrane. Acts as a receptor for the complex formed by the signal recognition particle (SRP) and the ribosome-nascent chain (RNC). Interaction with SRP-RNC leads to the transfer of the RNC complex to the Sec translocase for insertion into the membrane, the hydrolysis of GTP by both Ffh and FtsY, and the dissociation of the SRP-FtsY complex into the individual components. This chain is Signal recognition particle receptor FtsY, found in Escherichia coli (strain K12).